We begin with the raw amino-acid sequence, 191 residues long: Protein UL140 (191 aa).

A helical membrane pass occupies residues 28–48 (TLVVFGFIVTLLFFLFMLYFW).

It is found in the host membrane. The polypeptide is Protein UL140 (UL140) (Homo sapiens (Human)).